Reading from the N-terminus, the 206-residue chain is Small ribosomal subunit protein uS7 (206 aa).

The protein belongs to the universal ribosomal protein uS7 family. In terms of assembly, component of the small ribosomal subunit.

Its subcellular location is the cytoplasm. Functionally, component of the small ribosomal subunit. The ribosome is a large ribonucleoprotein complex responsible for the synthesis of proteins in the cell. In Entamoeba histolytica (strain ATCC 30459 / HM-1:IMSS / ABRM), this protein is Small ribosomal subunit protein uS7.